The chain runs to 156 residues: Large ribosomal subunit protein uL22c (156 aa).

Belongs to the universal ribosomal protein uL22 family. In terms of assembly, part of the 50S ribosomal subunit.

The protein localises to the plastid. Its subcellular location is the chloroplast. This protein binds specifically to 23S rRNA. Functionally, the globular domain of the protein is located near the polypeptide exit tunnel on the outside of the subunit, while an extended beta-hairpin is found that lines the wall of the exit tunnel in the center of the 70S ribosome. The sequence is that of Large ribosomal subunit protein uL22c (rpl22) from Buxus microphylla (Littleleaf boxwood).